The primary structure comprises 418 residues: Acyl-coenzyme A amino acid N-acyltransferase 2 (418 aa).

Residues Ser234, Asp327, and His361 each act as charge relay system in the active site. A Microbody targeting signal motif is present at residues Gly416–Leu418.

This sequence belongs to the C/M/P thioester hydrolase family.

Its subcellular location is the peroxisome. Functionally, acyltransferase which efficiently conjugates very long-chain and long-chain fatty acids to taurine. Shows no conjugation activity in the presence of glycine. The polypeptide is Acyl-coenzyme A amino acid N-acyltransferase 2 (Rattus norvegicus (Rat)).